We begin with the raw amino-acid sequence, 1009 residues long: MKTIAGLSWISALSSLASLPNGLGVSAQNNTPSTWPLHDNGLSDVVQWDHYSFKVNGKRLFVFSGEIHYWRIPVYEVWEDLLEKIKAAGFTAFAFYGNWAYHSANNKTLDFESGAHDFSKLFEIAHRVGLYVITRPGPYVNAEANAGGFPLWLTTGAYGKLRDDDPRYLQALDPYFSKFSELTSKHLVTNGGNALVYQIENEYGEQWKDRTKKIPNDAAGRYMQALEDSARANGIEIPLIHNDPNMNTKSWSKDYAPGAVGNVDVAGLDSYPSCWSCNLAECTGTNGKYVAYQVVNYYDHFKEVSPTQPSFFPEFQGGSYNPWGGPEGGCPGDIGADFANLFYRNLISQRVTAVSLYMMFGGTNWGAIAAPVTATSYDYSSPISENREIGAKFYETKNLAMFTRVADDLTVTDRLGSSSSYTTNPAVTASELRNPITKAAFYVTIHSVSSSSTTESFKLHISTSVGNLTIPQHSGSIVLNGHQSKIISTDFAMGNKTLTYSTAEILTYALIDSSPVVVLSTDVGGSVEFHVKGATKGSLASSGFTSNATFRAEAGGVTTNIERVTGMGVYQFNNGVKVVLADKPTAYLFWAPNLSNDPFAPVDQSVLIQGPYLVRGAALDGDVVALKGDVKNSTTIEVFAHETALTLSWNGKKLETSRTPYGSLKAQISAFNGTIPLPSLNDWKVNEGLPEKMPEYDDNGAAWVVANHTTTPNPTKPDTLPVLYVDEYGFHNSFHLFRGYFEGSATGAQLSVQGGLAFGWSAWLNGDLVGSWLGNTTLGVGNMTLSFANATVHANGTNVLLIAQDNTGHDLRGGATDPRGILRATLDGADFTSWKIAGEAGGENIQLDPVRGPLAEGGLTAERLGWHLSGFSDCDWASASPSTGFSGADIKFYRTTFPLDIPEDVDASFAFILNATGPKTVRVQLFVNGYQYARFNPYVGNEVKFPIPPGILNYAGDNVIGLSVWAQGNDGAKVDVEFVQEYAVESSWSSRFDSEYLRPEWTEERLAYA.

A signal peptide spans 1-27; it reads MKTIAGLSWISALSSLASLPNGLGVSA. Tyr-96 is a substrate binding site. An N-linked (GlcNAc...) asparagine glycan is attached at Asn-106. Substrate contacts are provided by Asn-141, Ala-142, Glu-143, and Asn-201. Glu-202 (proton donor) is an active-site residue. Position 271 (Tyr-271) interacts with substrate. A disulfide bond links Cys-277 and Cys-330. Glu-314 serves as the catalytic Nucleophile. Residue Tyr-379 coordinates substrate. Residues Asn-467, Asn-495, Asn-547, Asn-593, Asn-632, Asn-672, Asn-707, Asn-775, Asn-782, Asn-789, Asn-795, and Asn-914 are each glycosylated (N-linked (GlcNAc...) asparagine).

This sequence belongs to the glycosyl hydrolase 35 family.

The protein resides in the secreted. The catalysed reaction is Hydrolysis of terminal non-reducing beta-D-galactose residues in beta-D-galactosides.. Its function is as follows. Cleaves beta-linked terminal galactosyl residues from gangliosides, glycoproteins, and glycosaminoglycans. The polypeptide is Probable beta-galactosidase B (lacB) (Pyrenophora tritici-repentis (strain Pt-1C-BFP) (Wheat tan spot fungus)).